Here is a 575-residue protein sequence, read N- to C-terminus: Chaperonin CPN60-2, mitochondrial (575 aa).

A mitochondrion-targeting transit peptide spans 1 to 32 (MHRFASGLASKARLARKGANQIASRSSWSRNY).

It belongs to the chaperonin (HSP60) family.

The protein localises to the mitochondrion. Functionally, implicated in mitochondrial protein import and macromolecular assembly. May facilitate the correct folding of imported proteins. May also prevent misfolding and promote the refolding and proper assembly of unfolded polypeptides generated under stress conditions in the mitochondrial matrix. The chain is Chaperonin CPN60-2, mitochondrial (CPN60-2) from Cucurbita maxima (Pumpkin).